Reading from the N-terminus, the 183-residue chain is Gamma-crystallin N (183 aa).

4 Beta/gamma crystallin 'Greek key' domains span residues 6-46 (GKII…RVET), 47-89 (GAWI…KPVR), 95-136 (YRLE…KVYG), and 138-180 (GAWV…RRVV).

This sequence belongs to the beta/gamma-crystallin family. In terms of assembly, monomer.

In terms of biological role, crystallins are the dominant structural components of the vertebrate eye lens. The sequence is that of Gamma-crystallin N (crygn) from Xenopus tropicalis (Western clawed frog).